The sequence spans 466 residues: Cocosin 1 (466 aa).

The signal sequence occupies residues 1-22; sequence MGSSSLLSFSLCLLLLCHLSQA. Cystine bridges form between Cys45-Cys78 and Cys121-Cys288. 2 Cupin type-1 domains span residues 50–242 and 294–443; these read LNAL…ELAR and QNIG…DEAR.

Belongs to the 11S seed storage protein (globulins) family. In terms of assembly, hexamer; each subunit is composed of an acidic and a basic chain derived from a single precursor and linked by a disulfide bond. As to expression, endosperm of the seeds.

Seed storage protein. In Cocos nucifera (Coconut palm), this protein is Cocosin 1.